The primary structure comprises 147 residues: Protein PBDC1 homolog (147 aa).

This sequence belongs to the PBDC1 family.

It localises to the cytoplasm. The protein localises to the nucleus. The sequence is that of Protein PBDC1 homolog from Schizosaccharomyces pombe (strain 972 / ATCC 24843) (Fission yeast).